We begin with the raw amino-acid sequence, 202 residues long: uncharacterized protein (202 aa).

3 consecutive transmembrane segments (helical) span residues 34 to 54 (AAYV…QARI), 102 to 122 (MGVA…PLVI), and 125 to 145 (ILPL…FNKA). The interval 165–202 (NKPAAAVTGTSSNSNNASAKSDGPTITELNENETEKSS) is disordered. Positions 168-185 (AAAVTGTSSNSNNASAKS) are enriched in low complexity. Serine 185 and serine 201 each carry phosphoserine.

Belongs to the PHO88 family.

The protein resides in the endoplasmic reticulum membrane. This is an uncharacterized protein from Schizosaccharomyces pombe (strain 972 / ATCC 24843) (Fission yeast).